We begin with the raw amino-acid sequence, 408 residues long: Glutamate N-acetyltransferase (408 aa).

The substrate site is built by Thr-150, Lys-176, Thr-189, Glu-271, Asn-403, and Thr-408. Residue Thr-189 is the Nucleophile of the active site.

Belongs to the ArgJ family. As to quaternary structure, heterotetramer of two alpha and two beta chains.

The protein localises to the cytoplasm. The catalysed reaction is N(2)-acetyl-L-ornithine + L-glutamate = N-acetyl-L-glutamate + L-ornithine. It participates in amino-acid biosynthesis; L-arginine biosynthesis; L-ornithine and N-acetyl-L-glutamate from L-glutamate and N(2)-acetyl-L-ornithine (cyclic): step 1/1. Catalyzes the transfer of the acetyl group from N(2)-acetylornithine to glutamate, forming N-acetylglutamate and L-ornithine. The polypeptide is Glutamate N-acetyltransferase (Methanococcus maripaludis (strain C6 / ATCC BAA-1332)).